The chain runs to 509 residues: Heat shock 70 kDa protein 14 (509 aa).

This sequence belongs to the heat shock protein 70 family. As to quaternary structure, component of ribosome-associated complex (RAC), a heterodimer composed of Hsp70/DnaK-type chaperone HSPA14 and Hsp40/DnaJ-type chaperone DNAJC2.

It localises to the cytoplasm. The protein localises to the cytosol. Component of the ribosome-associated complex (RAC), a complex involved in folding or maintaining nascent polypeptides in a folding-competent state. In the RAC complex, binds to the nascent polypeptide chain, while DNAJC2 stimulates its ATPase activity. The chain is Heat shock 70 kDa protein 14 (HSPA14) from Homo sapiens (Human).